We begin with the raw amino-acid sequence, 124 residues long: ATP synthase subunit H, mitochondrial (124 aa).

A mitochondrion-targeting transit peptide spans 1–32; that stretch reads MFPIASRRILLNASVLPLRLCNRNFTTTRISY. Positions 89-124 are disordered; that stretch reads NVETAHVAKESEEGESEPIEEDWLVLDDAEETKESH. Acidic residues predominate over residues 100 to 124; the sequence is EEGESEPIEEDWLVLDDAEETKESH.

The protein belongs to the ATPase h subunit family. In terms of assembly, F-type ATPases have 2 components, CF(1) - the catalytic core - and CF(0) - the membrane proton channel. In yeast, the dimeric form of ATP synthase consists of 17 polypeptides: alpha, beta, gamma, delta, epsilon, 4 (B), 5 (OSCP), 6 (A), 8, 9 (C), d, E (Tim11), f, g, h, i/j and k.

It is found in the mitochondrion. It localises to the mitochondrion inner membrane. In terms of biological role, mitochondrial membrane ATP synthase (F(1)F(0) ATP synthase or Complex V) produces ATP from ADP in the presence of a proton gradient across the membrane which is generated by electron transport complexes of the respiratory chain. F-type ATPases consist of two structural domains, F(1) - containing the extramembraneous catalytic core and F(0) - containing the membrane proton channel, linked together by a central stalk and a peripheral stalk. During catalysis, ATP synthesis in the catalytic domain of F(1) is coupled via a rotary mechanism of the central stalk subunits to proton translocation. Part of the complex F(0) domain. Minor subunit located with subunit a in the membrane. In Saccharomyces cerevisiae (strain ATCC 204508 / S288c) (Baker's yeast), this protein is ATP synthase subunit H, mitochondrial (ATP14).